A 551-amino-acid chain; its full sequence is Probable 4-coumarate--CoA ligase 2 (551 aa).

ATP contacts are provided by serine 205, serine 206, glycine 207, threonine 208, threonine 209, and lysine 213. (E)-4-coumaroyl-AMP contacts are provided by tyrosine 253 and threonine 257. Lysine 274 provides a ligand contact to CoA. Positions 276–346 (EFVRFLDLIQ…RFKGKLIIKQ (71 aa)) are SBD1. Alanine 323, glutamine 346, glycine 347, and threonine 351 together coordinate (E)-4-coumaroyl-AMP. ATP-binding residues include glutamine 346, glycine 347, threonine 351, aspartate 430, and arginine 445. Residues 347-409 (GYGATELSPA…IKGPNVMLGY (63 aa)) form an SBD2 region. 2 residues coordinate (E)-4-coumaroyl-AMP: lysine 447 and lysine 451. Residues lysine 453 and glycine 454 each coordinate CoA. Lysine 537 is a binding site for ATP.

The protein belongs to the ATP-dependent AMP-binding enzyme family. Requires Mg(2+) as cofactor.

It catalyses the reaction (E)-4-coumarate + ATP + CoA = (E)-4-coumaroyl-CoA + AMP + diphosphate. The catalysed reaction is (E)-4-coumarate + ATP + H(+) = (E)-4-coumaroyl-AMP + diphosphate. The enzyme catalyses (E)-4-coumaroyl-AMP + CoA = (E)-4-coumaroyl-CoA + AMP + H(+). The protein operates within phytoalexin biosynthesis; 3,4',5-trihydroxystilbene biosynthesis; 3,4',5-trihydroxystilbene from trans-4-coumarate: step 1/2. Its function is as follows. Carboxylate--CoA ligase that may use 4-coumarate as substrate. Follows a two-step reaction mechanism, wherein the carboxylate substrate first undergoes adenylation by ATP, followed by a thioesterification in the presence of CoA to yield the final CoA thioester. The chain is Probable 4-coumarate--CoA ligase 2 (4cl2) from Dictyostelium discoideum (Social amoeba).